A 120-amino-acid polypeptide reads, in one-letter code: Large ribosomal subunit protein bL17 (120 aa).

The protein belongs to the bacterial ribosomal protein bL17 family. Part of the 50S ribosomal subunit. Contacts protein L32.

This Bacillus cereus (strain ATCC 14579 / DSM 31 / CCUG 7414 / JCM 2152 / NBRC 15305 / NCIMB 9373 / NCTC 2599 / NRRL B-3711) protein is Large ribosomal subunit protein bL17.